The following is a 223-amino-acid chain: MHLKKALCPALCTFLIHLCLHAGERTVPVDIFLMIDKSRSMQEPGKFSSLHRWVRDEFVSSMTIQGDWITVYQFYEKPEELITLTLRSEQDRDKIISVVDSIVPNGRYTDIGRALDTVWEIQEKRKDNNRHKVLLLVTDLEHDAPLTSKYRGKQRSFQSPYLVRARRVKHDNWYEITLDMAVHDRVAHTARELYRSIAAAHSKRPTPTPPAKESSPRYTPSLD.

Positions 1–22 (MHLKKALCPALCTFLIHLCLHA) are cleaved as a signal peptide. Residues 30-204 (DIFLMIDKSR…RSIAAAHSKR (175 aa)) form the VWFA domain. Residues 199–223 (AAHSKRPTPTPPAKESSPRYTPSLD) form a disordered region.

This is an uncharacterized protein from Treponema pallidum (strain Nichols).